We begin with the raw amino-acid sequence, 75 residues long: Protein SlyX homolog (75 aa).

The protein belongs to the SlyX family.

In Vibrio atlanticus (strain LGP32) (Vibrio splendidus (strain Mel32)), this protein is Protein SlyX homolog.